Reading from the N-terminus, the 296-residue chain is Galectin-3 (296 aa).

Positions 1-11 are enriched in polar residues; it reads MADSFSLNDAL. Residues 1-150 form a disordered region; the sequence is MADSFSLNDA…PSAPGAYPAA (150 aa). Position 2 is an N-acetylalanine (alanine 2). 2 positions are modified to phosphoserine; by CK1: serine 6 and serine 12. Low complexity-rich tracts occupy residues 12–31 and 38–47; these read SGSGNPNPQGWPGPWGNQPA and GASYPGAYPG. 8 consecutive repeat copies span residues 36-44, 45-53, 54-62, 63-71, 72-80, 81-89, 90-98, and 99-107. Positions 36 to 143 are 12 X 9 AA tandem repeats of Y-P-G-X(3)-P-G-[GAT]; it reads YPGASYPGAY…AYPPPGQPSA (108 aa). The span at 48-120 shows a compositional bias: pro residues; it reads QAPPGGYPGQ…PTAPAYPGPT (73 aa). The stretch at 108-115 is one 9; approximate repeat; sequence YPGPTAPA. Residues 116 to 124 form repeat 10; it reads YPGPTAPGT. The segment covering 121 to 133 has biased composition (low complexity); sequence APGTQPGQPSGPG. An 11; approximate repeat occupies 125-134; that stretch reads QPGQPSGPGA. Residues 135 to 143 form a 12; approximate repeat; sequence YPPPGQPSA. Residues 164 to 294 enclose the Galectin domain; it reads YDLPLPGGVK…DIDLTSASYA (131 aa). Residue 227–233 participates in a beta-D-galactoside binding; that stretch reads WGKEERQ. The Nuclear export signal signature appears at 272 to 287; sequence KNLPEISKLGISGDID.

In terms of assembly, probably forms homo- or heterodimers. Interacts with DMBT1. Interacts with CD6 and ALCAM. Forms a complex with the ITGA3, ITGB1 and CSPG4. Interacts with LGALS3BP, LYPD3, ZFTRAF1 and UACA. Interacts with TRIM16; this interaction mediates autophagy of damage endomembranes. Interacts with cargo receptor TMED10; the interaction mediates the translocation from the cytoplasm into the ERGIC (endoplasmic reticulum-Golgi intermediate compartment) and thereby secretion. Interacts with and inhibits by binding NCR3/NKp30. In terms of processing, the degree of phosphorylation is higher in the cytoplasmic form than in the nuclear form. In protein isolated from a canine kidney cell line, 90% of the phosphate was on Ser-6 and 10% was on Ser-12.

The protein resides in the cytoplasm. It localises to the nucleus. It is found in the secreted. Its function is as follows. Galactose-specific lectin which binds IgE. May mediate with the alpha-3, beta-1 integrin the stimulation by CSPG4 of endothelial cells migration. Together with DMBT1, required for terminal differentiation of columnar epithelial cells during early embryogenesis. In the nucleus: acts as a pre-mRNA splicing factor. Involved in acute inflammatory responses including neutrophil activation and adhesion, chemoattraction of monocytes macrophages, opsonization of apoptotic neutrophils, and activation of mast cells. Together with TRIM16, coordinates the recognition of membrane damage with mobilization of the core autophagy regulators ATG16L1 and BECN1 in response to damaged endomembranes. When secreted, interacts with NK cell-activating receptor NCR3/NKp30 acting as an inhibitory ligand which antagonizes NK cell attack. The sequence is that of Galectin-3 (LGALS3) from Canis lupus familiaris (Dog).